Here is a 400-residue protein sequence, read N- to C-terminus: Cytochrome P450 BJ-1 homolog (400 aa).

A heme-binding site is contributed by Cys-349.

It belongs to the cytochrome P450 family. It depends on heme as a cofactor.

Functionally, cytochromes P450 are a group of heme-thiolate monooxygenases. They oxidize a variety of structurally unrelated compounds, including steroids, fatty acids, and xenobiotics. This is Cytochrome P450 BJ-1 homolog (cyp112A2) from Sinorhizobium fredii (strain NBRC 101917 / NGR234).